A 421-amino-acid polypeptide reads, in one-letter code: MPEAIRAVRGMNDILPDESDLWGFFEDTIRTWLAAYGYRNLRTPIVEQTDLFVRSIGEVTDIVEKEMYSFIDQLNGENLTLRPEGTASCVRAVIEHNLLYSGPQRLYYSGPMFRHERPQKGRYRQFHQVGVEALGFVGPDIDAELIIMCARLWRLLGIPDVRLEISTLGSIESRLIYRARLISYLEKFYDELDEDARRRLKTNPLRILDSKNPGMREILEGAPHLFDDLDEDSLIHFDALQRILRNQGISFEINHRLVRGLDYYNRTVFEWVTDKLGAQGTICAGGRYDGLIAQIGGKPAPACGFAMGIERILSLISETDVAAEIHTVPDVYVVHQGDIAAGFSWKVAESLRDAGFKVVLHSGGGSFKAQMKKADASGARFAAIIGDDEAATGQVSIKSLREAVEQVKIDLTKVAVFLENI.

It belongs to the class-II aminoacyl-tRNA synthetase family. As to quaternary structure, homodimer.

The protein localises to the cytoplasm. The enzyme catalyses tRNA(His) + L-histidine + ATP = L-histidyl-tRNA(His) + AMP + diphosphate + H(+). The polypeptide is Histidine--tRNA ligase (Nitrosomonas eutropha (strain DSM 101675 / C91 / Nm57)).